We begin with the raw amino-acid sequence, 513 residues long: Putative ATP-dependent RNA helicase QP509L (513 aa).

Positions 110–262 (KKLLSPYGRF…KIIIHHLGQP (153 aa)) constitute a Helicase ATP-binding domain. Residue 123–130 (LNTGLGKT) participates in ATP binding. A DEAH box motif is present at residues 215–218 (DEAH).

It belongs to the DEAD box helicase family. DEAH subfamily.

It carries out the reaction ATP + H2O = ADP + phosphate + H(+). In African swine fever virus (isolate Tick/South Africa/Pretoriuskop Pr4/1996) (ASFV), this protein is Putative ATP-dependent RNA helicase QP509L.